We begin with the raw amino-acid sequence, 233 residues long: Orotidine 5'-phosphate decarboxylase (233 aa).

Substrate is bound by residues Asp9, Lys31, 58–67 (DLKLHDIPNT), Thr120, Arg182, Gln191, Gly211, and Arg212. Lys60 serves as the catalytic Proton donor.

The protein belongs to the OMP decarboxylase family. Type 1 subfamily. Homodimer.

It catalyses the reaction orotidine 5'-phosphate + H(+) = UMP + CO2. It functions in the pathway pyrimidine metabolism; UMP biosynthesis via de novo pathway; UMP from orotate: step 2/2. Functionally, catalyzes the decarboxylation of orotidine 5'-monophosphate (OMP) to uridine 5'-monophosphate (UMP). The chain is Orotidine 5'-phosphate decarboxylase from Listeria innocua serovar 6a (strain ATCC BAA-680 / CLIP 11262).